Consider the following 85-residue polypeptide: Small ribosomal subunit protein bS20 (85 aa).

Disordered regions lie at residues 1–25 (MANI…ASIK) and 62–85 (ARKG…QVNA).

It belongs to the bacterial ribosomal protein bS20 family.

In terms of biological role, binds directly to 16S ribosomal RNA. The sequence is that of Small ribosomal subunit protein bS20 from Bacillus cereus (strain G9842).